The following is a 92-amino-acid chain: Small ribosomal subunit protein uS19 (92 aa).

It belongs to the universal ribosomal protein uS19 family.

In terms of biological role, protein S19 forms a complex with S13 that binds strongly to the 16S ribosomal RNA. The chain is Small ribosomal subunit protein uS19 from Photobacterium profundum (strain SS9).